We begin with the raw amino-acid sequence, 571 residues long: Proline--tRNA ligase (571 aa).

The protein belongs to the class-II aminoacyl-tRNA synthetase family. ProS type 1 subfamily. As to quaternary structure, homodimer.

It is found in the cytoplasm. It carries out the reaction tRNA(Pro) + L-proline + ATP = L-prolyl-tRNA(Pro) + AMP + diphosphate. Catalyzes the attachment of proline to tRNA(Pro) in a two-step reaction: proline is first activated by ATP to form Pro-AMP and then transferred to the acceptor end of tRNA(Pro). As ProRS can inadvertently accommodate and process non-cognate amino acids such as alanine and cysteine, to avoid such errors it has two additional distinct editing activities against alanine. One activity is designated as 'pretransfer' editing and involves the tRNA(Pro)-independent hydrolysis of activated Ala-AMP. The other activity is designated 'posttransfer' editing and involves deacylation of mischarged Ala-tRNA(Pro). The misacylated Cys-tRNA(Pro) is not edited by ProRS. The sequence is that of Proline--tRNA ligase from Pseudomonas entomophila (strain L48).